The primary structure comprises 227 residues: 2-heptyl-1-hydroxyquinolin-4(1H)-one methyltransferase (227 aa).

It belongs to the methyltransferase superfamily. Monomer.

Its subcellular location is the cytoplasm. It catalyses the reaction 2-heptyl-1-hydroxy-4(1H)-quinolinone + S-adenosyl-L-methionine = 2-heptyl-1-methoxy-4(1H)-quinolinone + S-adenosyl-L-homocysteine + H(+). It carries out the reaction 3-bromo-2-heptyl-1-hydroxy-4(1H)-quinolinone + S-adenosyl-L-methionine = 3-bromo-2-heptyl-1-methoxy-4(1H)-quinolinone + S-adenosyl-L-homocysteine + H(+). Functionally, involved in cellular response to chemical stress and may contribute to resistance toward antimicrobial natural compounds as well as drugs. Catalyzes the methylation and detoxification of the P.aeruginosa toxin 2-heptyl-1-hydroxy-4(1H)-quinolinone (HQNO) to 2-heptyl-1-methoxy-4(1H)-quinolinone (HMOQ). Can also methylate 3-bromo-2-heptyl-1-hydroxy-4(1H)-quinolinone, and shows much lower activity with 1-hydroxyquinolin-4(1H)-one, quercetin, 4-hydroxyquinolin-2(1H)-one (DHQ) and 4-hydroxyisoquinolin-1(2H)-one. The chain is 2-heptyl-1-hydroxyquinolin-4(1H)-one methyltransferase from Mycobacteroides abscessus (strain ATCC 19977 / DSM 44196 / CCUG 20993 / CIP 104536 / JCM 13569 / NCTC 13031 / TMC 1543 / L948) (Mycobacterium abscessus).